The primary structure comprises 317 residues: NAC domain-containing protein 19 (317 aa).

An NAC domain is found at 14–162; it reads LPPGFRFYPT…DWVLCRIYKK (149 aa).

As to quaternary structure, dimer. Interacts with RHA2A, RHA2B or RHG1A, but not with RHA3A or RHA3B. As to expression, expressed in stems, flowers, cauline leaves and rosettes.

The protein resides in the nucleus. Its function is as follows. Transcription factors that bind specifically to the 5'-CATGTG-3' motif. This chain is NAC domain-containing protein 19 (NAC019), found in Arabidopsis thaliana (Mouse-ear cress).